Reading from the N-terminus, the 397-residue chain is MGKAKYERSKPHVNIGTIGHVDHGKTTLTAAITITMHNRYGTGGAVAFDMIDKAPEERERGITISTAHVEYETDKRHYAHVDCPGHADYVKNMITGAAQMDGAILVCSAADGPMPQTREHILLSRQVGVPYIVVFLNKCDMVDDEELLELVEMEVRDLLNMYEFPGDDTPVIMGSALKALEDPAGPWGDKIVELFDAIDTWIPEPVRDTDKPFLMPVEDVFSITGRGTVATGRIERGIVKVQEEISLVGLSEAPRKLVVTGVEMFRKLLDQGQAGDNVGILLRGIQRDEIERGQVLAKTGSIQPHTKFMAEVYVLKKEEGGRHTPFFDGYRPQFYFRTTDVTGSIKLPEGVEMVMPGDNITMEIELISPIATEEGLRFAIREGGRTVGAGVVASIIE.

One can recognise a tr-type G domain in the interval 10–206; sequence KPHVNIGTIG…AIDTWIPEPV (197 aa). A G1 region spans residues 19–26; that stretch reads GHVDHGKT. Residue 19–26 participates in GTP binding; the sequence is GHVDHGKT. Mg(2+) is bound at residue T26. Residues 61–65 are G2; the sequence is GITIS. The segment at 82-85 is G3; that stretch reads DCPG. Residues 82–86 and 137–140 contribute to the GTP site; these read DCPGH and NKCD. Positions 137-140 are G4; that stretch reads NKCD. Residues 175-177 are G5; sequence SAL.

This sequence belongs to the TRAFAC class translation factor GTPase superfamily. Classic translation factor GTPase family. EF-Tu/EF-1A subfamily. In terms of assembly, monomer.

Its subcellular location is the cytoplasm. It carries out the reaction GTP + H2O = GDP + phosphate + H(+). Its function is as follows. GTP hydrolase that promotes the GTP-dependent binding of aminoacyl-tRNA to the A-site of ribosomes during protein biosynthesis. The protein is Elongation factor Tu 2 of Alkaliphilus metalliredigens (strain QYMF).